Here is a 614-residue protein sequence, read N- to C-terminus: ATP-dependent zinc metalloprotease FtsH (614 aa).

Over 1-5 the chain is Cytoplasmic; it reads MLPIR. The chain crosses the membrane as a helical span at residues 6-26; the sequence is WFLALLAVFLAVAGLDLWFSQ. Over 27-127 the chain is Periplasmic; that stretch reads TGARPSSATG…AVSARERTAS (101 aa). A helical transmembrane segment spans residues 128-148; sequence IVHAIVHPLGLITLIVGILFV. At 149–614 the chain is on the cytoplasmic side; the sequence is VQRYAGRFTA…AQHPPSALAG (466 aa). Position 214 to 221 (214 to 221) interacts with ATP; it reads GPPGTGKT. His436 is a Zn(2+) binding site. The active site involves Glu437. Residues His440 and Asp513 each coordinate Zn(2+).

This sequence in the central section; belongs to the AAA ATPase family. In the C-terminal section; belongs to the peptidase M41 family. Homohexamer. Zn(2+) serves as cofactor.

It localises to the cell inner membrane. Its function is as follows. Acts as a processive, ATP-dependent zinc metallopeptidase for both cytoplasmic and membrane proteins. Plays a role in the quality control of integral membrane proteins. The polypeptide is ATP-dependent zinc metalloprotease FtsH (Opitutus terrae (strain DSM 11246 / JCM 15787 / PB90-1)).